Here is a 312-residue protein sequence, read N- to C-terminus: Ribosomal RNA small subunit methyltransferase H (312 aa).

S-adenosyl-L-methionine is bound by residues 32 to 34 (AGH), Asp51, Phe78, Asp99, and Gln106.

Belongs to the methyltransferase superfamily. RsmH family.

Its subcellular location is the cytoplasm. It catalyses the reaction cytidine(1402) in 16S rRNA + S-adenosyl-L-methionine = N(4)-methylcytidine(1402) in 16S rRNA + S-adenosyl-L-homocysteine + H(+). In terms of biological role, specifically methylates the N4 position of cytidine in position 1402 (C1402) of 16S rRNA. The protein is Ribosomal RNA small subunit methyltransferase H of Exiguobacterium sibiricum (strain DSM 17290 / CCUG 55495 / CIP 109462 / JCM 13490 / 255-15).